Here is a 447-residue protein sequence, read N- to C-terminus: BAG family molecular chaperone regulator 5 (447 aa).

5 consecutive BAG domains span residues 9 to 86 (SISR…EQNA), 95 to 167 (QNIF…EDCM), 182 to 260 (SVAK…DLEE), 275 to 350 (SIIK…DLKE), and 365 to 442 (PHKA…DMKS).

Binds to the ATPase domain of HSP/HSP70 chaperones. Binds PRKN. Interacts with HSPA8. Interacts with JPH2.

Co-chaperone for HSP/HSP70 proteins. It functions as a nucleotide-exchange factor promoting the release of ADP from HSP70, thereby activating HSP70-mediated protein refolding. Has an essential role in maintaining proteostasis at junctional membrane complexes (JMC), where it may function as a scaffold between the HSPA8 chaperone and JMC proteins enabling correct, HSPA8-dependent JMC protein folding. Inhibits both auto-ubiquitination of PRKN and ubiquitination of target proteins by PRKN. The protein is BAG family molecular chaperone regulator 5 (Bag5) of Mus musculus (Mouse).